Consider the following 101-residue polypeptide: Small ribosomal subunit protein uS14 (101 aa).

The protein belongs to the universal ribosomal protein uS14 family. In terms of assembly, part of the 30S ribosomal subunit. Contacts proteins S3 and S10.

Functionally, binds 16S rRNA, required for the assembly of 30S particles and may also be responsible for determining the conformation of the 16S rRNA at the A site. This Neisseria meningitidis serogroup C / serotype 2a (strain ATCC 700532 / DSM 15464 / FAM18) protein is Small ribosomal subunit protein uS14.